The following is a 117-amino-acid chain: Galanin peptides (117 aa).

Positions 1 to 19 (MQRCAGFLFLSLILCAALS) are cleaved as a signal peptide. Residues 20–30 (ETFGLVLSAKE) constitute a propeptide that is removed on maturation. Thr61 carries the threonine amide modification.

The protein belongs to the galanin family.

It localises to the secreted. Endocrine hormone of the central and peripheral nervous systems that binds and activates the G protein-coupled receptors GALR1, GALR2, and GALR3. This small neuropeptide may regulate diverse physiologic functions including contraction of smooth muscle of the gastrointestinal and genitourinary tract, growth hormone and insulin release and adrenal secretion. In Coturnix japonica (Japanese quail), this protein is Galanin peptides (GAL).